The chain runs to 74 residues: Translational regulator CsrA (74 aa).

This sequence belongs to the CsrA/RsmA family. Homodimer; the beta-strands of each monomer intercalate to form a hydrophobic core, while the alpha-helices form wings that extend away from the core.

Its subcellular location is the cytoplasm. Its function is as follows. A translational regulator that binds mRNA to regulate translation initiation and/or mRNA stability. Usually binds in the 5'-UTR at or near the Shine-Dalgarno sequence preventing ribosome-binding, thus repressing translation. Its main target seems to be the major flagellin gene, while its function is anatagonized by FliW. The chain is Translational regulator CsrA from Oceanobacillus iheyensis (strain DSM 14371 / CIP 107618 / JCM 11309 / KCTC 3954 / HTE831).